A 63-amino-acid chain; its full sequence is Large ribosomal subunit protein bL32 (63 aa).

The segment at 1-22 (MANPKAKMSKSRRDKRRAQFNA) is disordered. Over residues 7–18 (KMSKSRRDKRRA) the composition is skewed to basic residues.

Belongs to the bacterial ribosomal protein bL32 family.

The polypeptide is Large ribosomal subunit protein bL32 (Chlorobium limicola (strain DSM 245 / NBRC 103803 / 6330)).